Reading from the N-terminus, the 151-residue chain is MKCPYCGSLDNKVIDSRLSRDDTETRRRRECLECARRFTTYEHVEKAPLMIVKKDGRREEFLKDKVRSGMMSACQKRRISINIIEDFISELEQDLMEMGEHEIPSSIIGEKVMKKLHALDDVAYVRFASVYREFKDVHDFYSELKSLLKKQ.

Residues 3–34 fold into a zinc finger; that stretch reads CPYCGSLDNKVIDSRLSRDDTETRRRRECLEC. The ATP-cone domain maps to 49 to 139; sequence LMIVKKDGRR…VYREFKDVHD (91 aa).

Belongs to the NrdR family. Requires Zn(2+) as cofactor.

Functionally, negatively regulates transcription of bacterial ribonucleotide reductase nrd genes and operons by binding to NrdR-boxes. This is Transcriptional repressor NrdR from Desulfosudis oleivorans (strain DSM 6200 / JCM 39069 / Hxd3) (Desulfococcus oleovorans).